A 465-amino-acid chain; its full sequence is Ribulose bisphosphate carboxylase large chain (465 aa).

An N6,N6,N6-trimethyllysine modification is found at Lys-4. The substrate site is built by Asn-113 and Thr-163. Lys-165 serves as the catalytic Proton acceptor. Lys-167 is a binding site for substrate. Positions 191, 193, and 194 each coordinate Mg(2+). Position 191 is an N6-carboxylysine (Lys-191). Residue His-284 is the Proton acceptor of the active site. Substrate-binding residues include Arg-285, His-317, and Ser-369.

The protein belongs to the RuBisCO large chain family. Type I subfamily. Heterohexadecamer of 8 large chains and 8 small chains; disulfide-linked. The disulfide link is formed within the large subunit homodimers. Requires Mg(2+) as cofactor. The disulfide bond which can form in the large chain dimeric partners within the hexadecamer appears to be associated with oxidative stress and protein turnover.

The protein resides in the plastid. It is found in the chloroplast. It catalyses the reaction 2 (2R)-3-phosphoglycerate + 2 H(+) = D-ribulose 1,5-bisphosphate + CO2 + H2O. The catalysed reaction is D-ribulose 1,5-bisphosphate + O2 = 2-phosphoglycolate + (2R)-3-phosphoglycerate + 2 H(+). In terms of biological role, ruBisCO catalyzes two reactions: the carboxylation of D-ribulose 1,5-bisphosphate, the primary event in carbon dioxide fixation, as well as the oxidative fragmentation of the pentose substrate in the photorespiration process. Both reactions occur simultaneously and in competition at the same active site. The polypeptide is Ribulose bisphosphate carboxylase large chain (Cyrilla racemiflora (Swamp titi)).